Here is a 300-residue protein sequence, read N- to C-terminus: Probable mitochondrial 2-oxodicarboxylate carrier (300 aa).

The interval 1–20 (MTSKGNAGNPPTPTPAPVKS) is disordered. Solcar repeat units lie at residues 21–104 (QPLW…YEKQ), 114–200 (PTQM…IKSA), and 209–295 (GVLV…VMKL). The next 6 helical transmembrane spans lie at 27–47 (LVSGGIAGVSEILVMYPLDVV), 74–93 (LKMYRGIVPPILVEAPKRAI), 120–140 (IGSGVLAGITEAFIVVPFELV), 171–191 (GFFKGLESTIWRHACWNGGYF), 209–229 (GVLVNNFIAGGLAGTFGTMLN), and 278–298 (LGPGGGILLVVNEFVMKLLAG).

It belongs to the mitochondrial carrier (TC 2.A.29) family.

The protein resides in the mitochondrion inner membrane. The enzyme catalyses 2-oxoadipate(in) + 2-oxoglutarate(out) = 2-oxoadipate(out) + 2-oxoglutarate(in). It catalyses the reaction hexanedioate(in) + 2-oxoglutarate(out) = hexanedioate(out) + 2-oxoglutarate(in). It carries out the reaction L-2-aminoadipate(in) + 2-oxoglutarate(out) = L-2-aminoadipate(out) + 2-oxoglutarate(in). The catalysed reaction is glutarate(in) + 2-oxoglutarate(out) = glutarate(out) + 2-oxoglutarate(in). The enzyme catalyses 2-oxoheptanedioate(in) + 2-oxoglutarate(out) = 2-oxoheptanedioate(out) + 2-oxoglutarate(in). It catalyses the reaction heptanedioate(in) + 2-oxoglutarate(out) = heptanedioate(out) + 2-oxoglutarate(in). It carries out the reaction citrate(in) + 2-oxoglutarate(out) = citrate(out) + 2-oxoglutarate(in). In terms of biological role, transports dicarboxylates across the inner membranes of mitochondria by a counter-exchange mechanism. Can transport 2-oxoadipate (2-oxohexanedioate), 2-oxoglutarate, adipate (hexanedioate), glutarate, and to a lesser extent, pimelate (heptanedioate), 2-oxopimelate (2-oxoheptanedioate), 2-aminoadipate (2-aminohexanedioate), oxaloacetate, and citrate. Plays a central role in catabolism of lysine, hydroxylysine, and tryptophan, by transporting common metabolite intermediates (such as 2-oxoadipate) into the mitochondria, where it is converted into acetyl-CoA and can enter the citric acid (TCA) cycle. The chain is Probable mitochondrial 2-oxodicarboxylate carrier (mcfT) from Dictyostelium discoideum (Social amoeba).